Consider the following 925-residue polypeptide: Probable glycoprotein hormone G-protein coupled receptor (925 aa).

The N-terminal stretch at 1–27 (MEDRGICPRVLQVLFLVVLILISPVYA) is a signal peptide. The Extracellular segment spans residues 28 to 529 (AKNDACTKCS…EDIMGYVWLT (502 aa)). An N-linked (GlcNAc...) asparagine glycan is attached at asparagine 61. 8 LRR repeats span residues 85 to 106 (KLKYLTLNNNKIKNIAKFRVKN), 110 to 131 (SLITLSYTHNIIETIENGAFDD), 134 to 155 (QLTQLDLSNNRLKEFPIFNKTS), 156 to 180 (SVTKLYLRGNPGITKLPRQSLGNLP), 181 to 202 (SLENLFMERTGIQEIPAGIFRQ), 203 to 224 (NTRLINLYFNKTKALERINEDA), 230 to 250 (SLKTLVLDETSVTSLPSRGLK), and 251 to 273 (NLHFLSLKDVPNFWQLPELDSIR). N-linked (GlcNAc...) asparagine glycosylation occurs at asparagine 152. An N-linked (GlcNAc...) asparagine glycan is attached at asparagine 212. Residues 299-493 (TMQKPSTEEN…PTLIPHSNHT (195 aa)) form a disordered region. Over residues 301 to 318 (QKPSTEENNGQTTASSPT) the composition is skewed to polar residues. One copy of the 1; truncated repeat lies at 333 to 349 (STQPHTTSGFGGGGFPG). The tract at residues 333-461 (STQPHTTSGF…PGGGGFPGGG (129 aa)) is 5 X approximate tandem repeats. Over residues 341–362 (GFGGGGFPGGGGGFPGGGGFPA) the composition is skewed to gly residues. A run of 3 repeats spans residues 350–384 (GGGGFPGGGGFPAGGSKTSTQPHTTSGFGGGGFPG), 385–419 (GGGGFPGGGGFPAGGSKTSTQPHTTSGFGGGGFPG), and 420–453 (GGGGFPGGGGFPGGSNTSTQPHTTSNSGGGGFPG). Residues 365 to 375 (SKTSTQPHTTS) are compositionally biased toward polar residues. The segment covering 376 to 397 (GFGGGGFPGGGGGFPGGGGFPA) has biased composition (gly residues). Residues 400 to 410 (SKTSTQPHTTS) are compositionally biased toward polar residues. The segment covering 411-432 (GFGGGGFPGGGGGFPGGGGFPG) has biased composition (gly residues). Polar residues predominate over residues 434-445 (SNTSTQPHTTSN). N-linked (GlcNAc...) asparagine glycosylation is present at asparagine 435. Residues 446–462 (SGGGGFPGGGGFPGGGT) show a composition bias toward gly residues. The 5; truncated repeat unit spans residues 454-461 (GGGFPGGG). Residues 476–493 (VHQSTADPPTLIPHSNHT) show a composition bias toward polar residues. The N-linked (GlcNAc...) asparagine glycan is linked to asparagine 495. Residues 530–551 (VVSFMVGAVALVANLVVALVLL) traverse the membrane as a helical segment. At 552-561 (TSQRRLNVTR) the chain is on the cytoplasmic side. Residues 562 to 584 (FLMCNLAFADFILGLYIFILTSV) form a helical membrane-spanning segment. Residues 585-606 (SAVTRGDYHNYVQQWQNGAGCK) are Extracellular-facing. A helical membrane pass occupies residues 607-628 (ILGFLAVFSSELSLFTLVMMTI). Over 629–651 (ERFYAIVHAMHMNARLSFRKTVR) the chain is Cytoplasmic. A helical transmembrane segment spans residues 652 to 673 (FMIGGWIFALVMAVVPLTGVSG). The Extracellular portion of the chain corresponds to 674–691 (YSKVAICLPFDVSDATST). The chain crosses the membrane as a helical span at residues 692–712 (AYVAFLLLVNGASFISVMYLY). The Cytoplasmic segment spans residues 713–739 (SRMLYVVVSGGDMEGAPKRNDSKVAKR). The helical transmembrane segment at 740 to 763 (MAILVFTDMLCWAPIAFFGLLAAF) threads the bilayer. Residues 764–774 (GQTLLTVTQSK) are Extracellular-facing. Residues 775 to 795 (ILLVFFFPINSICNPFLYAFF) form a helical membrane-spanning segment. At 796–925 (TKAFKRELFT…QKQKILQSPS (130 aa)) the chain is on the cytoplasmic side. The interval 904–925 (VTKSSSPPHLKLQKQKILQSPS) is disordered.

The protein belongs to the G-protein coupled receptor 1 family. FSH/LSH/TSH subfamily.

The protein localises to the cell membrane. Its function is as follows. Probable receptor for a glycoprotein hormone. The polypeptide is Probable glycoprotein hormone G-protein coupled receptor (Anthopleura elegantissima (Green aggregating anemone)).